The primary structure comprises 209 residues: Glutathione S-transferase D1 (209 aa).

One can recognise a GST N-terminal domain in the interval 1–81 (MVDFYYLPGS…YLVEKYGKTD (81 aa)). Glutathione is bound by residues Ser10, 51–53 (HTI), and 65–67 (ESR). Positions 87-208 (CPKKRAVINQ…AGCLEFKKYF (122 aa)) constitute a GST C-terminal domain.

Belongs to the GST superfamily. Delta family. Homodimer.

It carries out the reaction RX + glutathione = an S-substituted glutathione + a halide anion + H(+). It catalyses the reaction 1,1,1-trichloro-2,2-bis(4-chlorophenyl)ethane = 1,1-dichloro-2,2-bis(4-chlorophenyl)ethylene + chloride + H(+). Functionally, conjugation of reduced glutathione to a wide number of exogenous and endogenous hydrophobic electrophiles. Has DDT dehydrochlorinase activity. May be involved in detoxification. In Drosophila melanogaster (Fruit fly), this protein is Glutathione S-transferase D1.